The chain runs to 498 residues: Cytotardin (498 aa).

The segment at 18 to 58 (DRVHSKDELQALNTRLAKYIDKIRNLENENVALQRQLQTAE) is coil 1A. One can recognise an IF rod domain in the interval 22-378 (SKDELQALNT…KLLSGEEQRL (357 aa)). The linker 1 stretch occupies residues 59–69 (QTTVTEIHRVS). Residues 70–213 (KNYDEELAKL…ENLREEKSQR (144 aa)) form a coil 1B region. Residues 214–231 (QYLLHDLQRGLQDEFESK) form a linker 2 region. Residues 232 to 371 (LVQQLNELRA…AELATYNKLL (140 aa)) form a coil 2 region. The interval 381-425 (DGSGTVIRRPTGGATGTGSGIYGGTGSGGYSRDIGSTTTTKTTYT) is disordered. The segment covering 393–409 (GATGTGSGIYGGTGSGG) has biased composition (gly residues).

The protein belongs to the intermediate filament family.

The protein localises to the cytoplasm. The protein resides in the cell cortex. Functionally, intermediate filament (IF) protein that forms both short filaments and extensive cytoskeletal networks which most likely are homomeric. Some of the cytotardin arrays display cage-like perinuclear structures, while others are located in the periphery close to the cell membrane. The entire tardigrade body is ensheathed by a grid of belt-like filaments formed by the cytotardin protein, which retain their integrity even in contracted specimens. The belt-like structures encircling each epidermal cell might help to resist the shearing forces that arise during freezing and thawing cycles, whereas the dense meshwork at the basis of each claw and around the stylets might provide the tissue stability necessary for locomotion and feeding. The polypeptide is Cytotardin (Hypsibius exemplaris (Freshwater tardigrade)).